A 355-amino-acid polypeptide reads, in one-letter code: NADH-quinone oxidoreductase subunit H (355 aa).

8 helical membrane-spanning segments follow: residues 25–45, 91–111, 126–146, 170–190, 205–225, 253–273, 290–310, and 330–350; these read LVRI…LILW, WLYL…WAVI, LLYA…AGWA, MGFA…SEIV, FLSW…VSGI, MAFA…SALA, FIPG…VFIW, and VFLP…MSPL.

The protein belongs to the complex I subunit 1 family. In terms of assembly, NDH-1 is composed of 14 different subunits. Subunits NuoA, H, J, K, L, M, N constitute the membrane sector of the complex.

It localises to the cell inner membrane. The enzyme catalyses a quinone + NADH + 5 H(+)(in) = a quinol + NAD(+) + 4 H(+)(out). NDH-1 shuttles electrons from NADH, via FMN and iron-sulfur (Fe-S) centers, to quinones in the respiratory chain. The immediate electron acceptor for the enzyme in this species is believed to be ubiquinone. Couples the redox reaction to proton translocation (for every two electrons transferred, four hydrogen ions are translocated across the cytoplasmic membrane), and thus conserves the redox energy in a proton gradient. This subunit may bind ubiquinone. This Burkholderia vietnamiensis (strain G4 / LMG 22486) (Burkholderia cepacia (strain R1808)) protein is NADH-quinone oxidoreductase subunit H.